The chain runs to 206 residues: FMN-dependent NADH:quinone oxidoreductase (206 aa).

FMN contacts are provided by residues 15–17 (SVS), 94–97 (MYNF), and 138–141 (TRGG).

Belongs to the azoreductase type 1 family. In terms of assembly, homodimer. It depends on FMN as a cofactor.

The enzyme catalyses 2 a quinone + NADH + H(+) = 2 a 1,4-benzosemiquinone + NAD(+). The catalysed reaction is N,N-dimethyl-1,4-phenylenediamine + anthranilate + 2 NAD(+) = 2-(4-dimethylaminophenyl)diazenylbenzoate + 2 NADH + 2 H(+). Functionally, quinone reductase that provides resistance to thiol-specific stress caused by electrophilic quinones. Its function is as follows. Also exhibits azoreductase activity. Catalyzes the reductive cleavage of the azo bond in aromatic azo compounds to the corresponding amines. The sequence is that of FMN-dependent NADH:quinone oxidoreductase from Sinorhizobium medicae (strain WSM419) (Ensifer medicae).